Reading from the N-terminus, the 711-residue chain is MKSLILAEKPSVARDIADALQINQKRNGYFENNQYIVTWALGHLVTNATPEQYDKNLKEWRLEDLPIIPKYMKTVVIGKTSKQFKTVKALILDNKVKDIIIATDAGREGELVARLILDKVGNKKPIRRLWISSVTKKAIQQGFKNLKDGRQYNDLYYAALARSEADWIVGINATRALTTKYDAQLSLGRVQTPTIQLVNTRQQEINQFKPQQYFTLSLTVKGFDFQLESNQRYTNKETLEQMVNNLKNVDGKIKSVATKHKKSYPQSLYNLTDLQQDMYRRYKIGPKETLNTLQSLYERHKVVTYPRTDSNYLTTDMVDTMKERIQVTMATTYKDQARPLMSKTFSSKMSIFNNQKVSDHHAIIPTEVRPVMSDLSNRELKLYDMIVERFLEALMPPHEYDAITVTLEVAGHTFVLKENVTTVLGFKSIRQGESITEMQQPFSEGDEVKISKTNIREHETTPPEYFNEGSLLKAMENPQNFIQLKDKKYAQTLKQTGGIGTVATRADIIDKLFNMNAIESRDGKIKVTSKGKQILELAPEELTSPLLTAQWEEKLLLIERGKYQAKTFINEMKDFTKDVVNGIKNSDRKYKHDNLTTTECPTCGKFMIKVKTKNGQMLVCQDPSCKTKKNVQRKTNARCPNCKKKLTLFGKGKEAVYRCVCGHSETQAHMDQRMKSKSSGKVSRKEMKKYMNKNEGLDNNPFKDALKNLNL.

In terms of domain architecture, Toprim spans 2–135 (KSLILAEKPS…IRRLWISSVT (134 aa)). Mg(2+) contacts are provided by E8 and D104. A Topo IA-type catalytic domain is found at 152 to 580 (YNDLYYAALA…EMKDFTKDVV (429 aa)). Positions 186-191 (SLGRVQ) are interaction with DNA. The O-(5'-phospho-DNA)-tyrosine intermediate role is filled by Y305. The interval 691–711 (MNKNEGLDNNPFKDALKNLNL) is disordered.

This sequence belongs to the type IA topoisomerase family. It depends on Mg(2+) as a cofactor.

It carries out the reaction ATP-independent breakage of single-stranded DNA, followed by passage and rejoining.. Releases the supercoiling and torsional tension of DNA, which is introduced during the DNA replication and transcription, by transiently cleaving and rejoining one strand of the DNA duplex. Introduces a single-strand break via transesterification at a target site in duplex DNA. The scissile phosphodiester is attacked by the catalytic tyrosine of the enzyme, resulting in the formation of a DNA-(5'-phosphotyrosyl)-enzyme intermediate and the expulsion of a 3'-OH DNA strand. The free DNA strand then undergoes passage around the unbroken strand, thus removing DNA supercoils. Finally, in the religation step, the DNA 3'-OH attacks the covalent intermediate to expel the active-site tyrosine and restore the DNA phosphodiester backbone. This is DNA topoisomerase 3 from Staphylococcus aureus (strain NCTC 8325 / PS 47).